An 803-amino-acid chain; its full sequence is Mastermind-like domain-containing protein 1 (803 aa).

Disordered stretches follow at residues 22–50, 292–374, 420–452, and 486–641; these read NRQE…TGMA, LAAS…APSS, GHLI…QQSF, and QQQQ…PDQS. A compositionally biased stretch (polar residues) spans 296 to 309; that stretch reads KQGSATKQGSNRNW. The span at 312–340 shows a compositional bias: pro residues; it reads LPPPGLSPPYLPVPSPHPPPPQPPPPPFS. The span at 347-362 shows a compositional bias: low complexity; sequence SCMSSSSLSGSAVQSS. Polar residues-rich tracts occupy residues 363–374, 441–452, 495–526, and 547–564; these read PNALLSSMAPSS, NLSSPGLPQQSF, HQAN…SSSP, and PSPQ…QSSL. Residues 571–588 show a composition bias toward low complexity; that stretch reads ATPAHAPSATASSTATAT. A compositionally biased stretch (basic residues) spans 592 to 622; it reads QHHHQQHHHQQHHHQQQHHQQQHHQQHHHQQ. Positions 623 to 641 are enriched in low complexity; that stretch reads QQHQQQQHQQQQQQQPDQS.

It belongs to the mastermind family.

Its subcellular location is the nucleus. Transactivates the HES3 promoter independently of NOTCH proteins. HES3 is a non-canonical NOTCH target gene which lacks binding sites for RBPJ. Required for testosterone production. The protein is Mastermind-like domain-containing protein 1 (Mamld1) of Mus musculus (Mouse).